The following is a 738-amino-acid chain: LPS-assembly protein LptD (738 aa).

Positions 1-26 are cleaved as a signal peptide; the sequence is MEHKRNNILLAGLFFLLLGLVSIARA.

The protein belongs to the LptD family. As to quaternary structure, component of the lipopolysaccharide transport and assembly complex. Interacts with LptE and LptA.

The protein resides in the cell outer membrane. Functionally, together with LptE, is involved in the assembly of lipopolysaccharide (LPS) at the surface of the outer membrane. This chain is LPS-assembly protein LptD, found in Nitrosococcus oceani (strain ATCC 19707 / BCRC 17464 / JCM 30415 / NCIMB 11848 / C-107).